The sequence spans 1573 residues: Pentafunctional AROM polypeptide (1573 aa).

The segment at 1–384 is 3-dehydroquinate synthase; sequence MSNESNIITV…YEKHATVVSD (384 aa). Residues 46 to 48, 83 to 86, 114 to 116, and Asp119 contribute to the NAD(+) site; these read DSN, ESSK, and GGV. Residue Arg130 participates in 7-phospho-2-dehydro-3-deoxy-D-arabino-heptonate binding. 139–140 lines the NAD(+) pocket; sequence TT. Asp146 and Lys152 together coordinate 7-phospho-2-dehydro-3-deoxy-D-arabino-heptonate. Lys161 contributes to the NAD(+) binding site. Position 162 (Asn162) interacts with 7-phospho-2-dehydro-3-deoxy-D-arabino-heptonate. NAD(+)-binding positions include 179–182 and Asn190; that span reads FLHT. Glu194 contributes to the Zn(2+) binding site. Residues 194–197 and Lys250 contribute to the 7-phospho-2-dehydro-3-deoxy-D-arabino-heptonate site; that span reads EIIK. Glu260 serves as the catalytic Proton acceptor; for 3-dehydroquinate synthase activity. Residues 264–268 and His271 each bind 7-phospho-2-dehydro-3-deoxy-D-arabino-heptonate; that span reads RNLLN. His271 lines the Zn(2+) pocket. Catalysis depends on His275, which acts as the Proton acceptor; for 3-dehydroquinate synthase activity. 2 residues coordinate 7-phospho-2-dehydro-3-deoxy-D-arabino-heptonate: His287 and Lys356. His287 contacts Zn(2+). The interval 397–843 is EPSP synthase; that stretch reads VDEFTKSSWD…WDVLHQSFGV (447 aa). Cys825 serves as the catalytic For EPSP synthase activity. The interval 863–1058 is shikimate kinase; that stretch reads NASIILIGMR…KTKKRSTFLT (196 aa). 870–877 contributes to the ATP binding site; it reads GMRGAGKT. A 3-dehydroquinase region spans residues 1059-1280; sequence LNYPRIEDAL…AAPGQLTVKQ (222 aa). Catalysis depends on His1182, which acts as the Proton acceptor; for 3-dehydroquinate dehydratase activity. Catalysis depends on Lys1211, which acts as the Schiff-base intermediate with substrate; for 3-dehydroquinate dehydratase activity. The segment at 1293–1573 is shikimate dehydrogenase; sequence PEKFFLFGKP…FDAVYQKVIE (281 aa).

The protein in the N-terminal section; belongs to the sugar phosphate cyclases superfamily. Dehydroquinate synthase family. This sequence in the 2nd section; belongs to the EPSP synthase family. In the 3rd section; belongs to the shikimate kinase family. It in the 4th section; belongs to the type-I 3-dehydroquinase family. The protein in the C-terminal section; belongs to the shikimate dehydrogenase family. As to quaternary structure, homodimer. It depends on Zn(2+) as a cofactor.

It is found in the cytoplasm. It carries out the reaction 7-phospho-2-dehydro-3-deoxy-D-arabino-heptonate = 3-dehydroquinate + phosphate. The catalysed reaction is 3-dehydroquinate = 3-dehydroshikimate + H2O. The enzyme catalyses shikimate + NADP(+) = 3-dehydroshikimate + NADPH + H(+). It catalyses the reaction shikimate + ATP = 3-phosphoshikimate + ADP + H(+). It carries out the reaction 3-phosphoshikimate + phosphoenolpyruvate = 5-O-(1-carboxyvinyl)-3-phosphoshikimate + phosphate. It participates in metabolic intermediate biosynthesis; chorismate biosynthesis; chorismate from D-erythrose 4-phosphate and phosphoenolpyruvate: step 2/7. Its pathway is metabolic intermediate biosynthesis; chorismate biosynthesis; chorismate from D-erythrose 4-phosphate and phosphoenolpyruvate: step 3/7. It functions in the pathway metabolic intermediate biosynthesis; chorismate biosynthesis; chorismate from D-erythrose 4-phosphate and phosphoenolpyruvate: step 4/7. The protein operates within metabolic intermediate biosynthesis; chorismate biosynthesis; chorismate from D-erythrose 4-phosphate and phosphoenolpyruvate: step 5/7. It participates in metabolic intermediate biosynthesis; chorismate biosynthesis; chorismate from D-erythrose 4-phosphate and phosphoenolpyruvate: step 6/7. In terms of biological role, the AROM polypeptide catalyzes 5 consecutive enzymatic reactions in prechorismate polyaromatic amino acid biosynthesis. This chain is Pentafunctional AROM polypeptide, found in Schizosaccharomyces pombe (strain 972 / ATCC 24843) (Fission yeast).